The following is a 599-amino-acid chain: Membrane protein insertase YidC (599 aa).

Residues 6-26 traverse the membrane as a helical segment; that stretch reads NYFIAIALSVVIVLAWQFLYM. The disordered stretch occupies residues 35-78; it reads RAEEARQAQQQTTQQQPAPGAAPGATVEGAPPASSTQAAATATR. Residues 41 to 76 are compositionally biased toward low complexity; that stretch reads QAQQQTTQQQPAPGAAPGATVEGAPPASSTQAAATA. 4 helical membrane-spanning segments follow: residues 378 to 398, 448 to 468, 501 to 521, and 536 to 556; these read FGVAILLTTIVVKALFFPLAS, WPMLLQIPVFFALYKVIYVTI, VPHFLMIGVWPLVMGITMFLQ, and IFTWMPLIFTFMLASFPAGLV.

This sequence belongs to the OXA1/ALB3/YidC family. Type 1 subfamily. As to quaternary structure, interacts with the Sec translocase complex via SecD. Specifically interacts with transmembrane segments of nascent integral membrane proteins during membrane integration.

The protein localises to the cell inner membrane. Required for the insertion and/or proper folding and/or complex formation of integral membrane proteins into the membrane. Involved in integration of membrane proteins that insert both dependently and independently of the Sec translocase complex, as well as at least some lipoproteins. Aids folding of multispanning membrane proteins. In Agrobacterium fabrum (strain C58 / ATCC 33970) (Agrobacterium tumefaciens (strain C58)), this protein is Membrane protein insertase YidC.